Reading from the N-terminus, the 1428-residue chain is uncharacterized protein (1428 aa).

Disordered regions lie at residues 1-53 (MAKK…AFKV), 249-274 (DIKH…KDSK), and 377-413 (KNGI…ETRA). A compositionally biased stretch (polar residues) spans 16 to 33 (ATTSIPSRSASSPANKNQ). The span at 34-51 (VKGEKNNKTQKVEPKNAF) shows a compositional bias: basic and acidic residues. Residues 256 to 265 (KETQPSNQVD) show a composition bias toward polar residues. The 171-residue stretch at 641–811 (IDAVNNSQLL…FEGSNLITIP (171 aa)) folds into the Helicase ATP-binding domain. An ATP-binding site is contributed by 654 to 661 (GDTGCGKS). The DEAH box signature appears at 758-761 (DEVH). Residues 886–1064 (LIVYLLKYIF…EVVLRVKMCQ (179 aa)) form the Helicase C-terminal domain.

This sequence belongs to the helicase family. SKI2 subfamily.

The protein localises to the cytoplasm. This is an uncharacterized protein from Schizosaccharomyces pombe (strain 972 / ATCC 24843) (Fission yeast).